The chain runs to 309 residues: F-box/LRR-repeat protein At3g48880 (309 aa).

The F-box domain maps to 10-57 (LRRWEELDTDILVRIFQKFSVFELTSGLAHVCRGWRAACCDPILWKTV). 4 LRR repeats span residues 77–107 (VERRSDEALTRILKLSMNLSGGSTRTLIFHF), 108–133 (NLFLSDDQLTYTAERCPGLRRVVLPA), 159–184 (SIANPPYLLTEIAKNCKNFKELKIMG), and 208–233 (CSAIKREALMKILDGLPSLEVLNISH).

The polypeptide is F-box/LRR-repeat protein At3g48880 (Arabidopsis thaliana (Mouse-ear cress)).